The primary structure comprises 290 residues: Carbonic anhydrase-related protein (290 aa).

A Phosphoserine modification is found at Ser5. Residues 27–289 (VEWGYEEGVE…LSDRVIRAAF (263 aa)) form the Alpha-carbonic anhydrase domain. The active-site Proton donor/acceptor is His87. Zn(2+) is bound by residues His118 and His141.

Belongs to the alpha-carbonic anhydrase family.

Does not have a carbonic anhydrase catalytic activity. This is Carbonic anhydrase-related protein (Ca8) from Rattus norvegicus (Rat).